A 23-amino-acid polypeptide reads, in one-letter code: U22-ctenitoxin-Co1a (23 aa).

As to expression, expressed by the venom gland.

It is found in the secreted. This chain is U22-ctenitoxin-Co1a, found in Ctenus ornatus (Brazilian spider).